Reading from the N-terminus, the 252-residue chain is tRNA (guanine-N(1)-)-methyltransferase (252 aa).

Residues Gly113 and 133 to 138 (VGDFVL) contribute to the S-adenosyl-L-methionine site.

This sequence belongs to the RNA methyltransferase TrmD family. As to quaternary structure, homodimer.

Its subcellular location is the cytoplasm. It carries out the reaction guanosine(37) in tRNA + S-adenosyl-L-methionine = N(1)-methylguanosine(37) in tRNA + S-adenosyl-L-homocysteine + H(+). In terms of biological role, specifically methylates guanosine-37 in various tRNAs. This chain is tRNA (guanine-N(1)-)-methyltransferase, found in Francisella tularensis subsp. holarctica (strain FTNF002-00 / FTA).